Reading from the N-terminus, the 365-residue chain is Flagellar P-ring protein (365 aa).

The first 19 residues, 1–19 (MIKFLSALILLLVTTAAQA), serve as a signal peptide directing secretion.

This sequence belongs to the FlgI family. The basal body constitutes a major portion of the flagellar organelle and consists of four rings (L,P,S, and M) mounted on a central rod.

The protein resides in the periplasm. It localises to the bacterial flagellum basal body. Its function is as follows. Assembles around the rod to form the L-ring and probably protects the motor/basal body from shearing forces during rotation. This Shigella flexneri serotype 5b (strain 8401) protein is Flagellar P-ring protein.